A 1312-amino-acid polypeptide reads, in one-letter code: Tetratricopeptide repeat protein 21B (1312 aa).

TPR repeat units follow at residues Thr4–Asp38, Pro110–Ser143, Leu147–Ile180, Ala182–Phe213, Leu214–Asn247, and Ala325–His358. Residues Val365–Ile392 are a coiled coil. TPR repeat units lie at residues Thr493 to Cys526, Asp528 to Val560, Pro564 to Lys597, Val615 to Thr648, Pro720 to Asp753, Ser755 to Asp787, Leu789 to Ser820, Ala829 to Ile861, Ser881 to Ser914, Val916 to Lys947, Glu948 to Asn981, Ala983 to Thr1015, Pro1019 to Gly1052, Glu1193 to Cys1226, Lys1228 to Ser1260, and Pro1262 to Tyr1295.

The protein belongs to the TTC21 family. Component of the IFT complex A (IFT-A).

Component of the IFT complex A (IFT-A), a complex required for retrograde ciliary transport and entry into cilia of G protein-coupled receptors (GPCRs). Negatively modulates the SHH signal transduction. The sequence is that of Tetratricopeptide repeat protein 21B (ttc21b) from Xenopus laevis (African clawed frog).